Consider the following 244-residue polypeptide: MKHPPCSVVAAATAILAVVLAIGGCSTEGDAGKASDTAATASNGDAAMLLKQATDAMRKVTGMHVRLAVTGDVPNLRVTKLEGDISNTPQTVATGSATLLVGNKSEDAKFVYVDGHLYSDLGQPGTYTDFGNGASIYNVSVLLDPNKGLANLLANLKDASVAGSQQADGVATTKITGNSSADDIATLAGSRLTSEDVKTVPTTVWIASDGSSHLVQIQIAPTKDTSVTLTMSDWGKQVTATKPV.

Residues 1-24 form the signal peptide; the sequence is MKHPPCSVVAAATAILAVVLAIGG. Cysteine 25 carries the N-palmitoyl cysteine lipid modification. Residue cysteine 25 is the site of S-diacylglycerol cysteine attachment.

The protein belongs to the LppX/LprAFG lipoprotein family.

It is found in the cell membrane. In Mycobacterium tuberculosis (strain CDC 1551 / Oshkosh), this protein is Putative lipoprotein LprA (lprA).